The following is a 103-amino-acid chain: Histone H4 (103 aa).

Residues 1 to 14 (MSGRGKGGKGLGKG) show a composition bias toward gly residues. The segment at 1–20 (MSGRGKGGKGLGKGGAKRHR) is disordered. Serine 2 carries the N-acetylserine modification. N6-acetyl-N6-methyllysine; alternate is present on residues lysine 6 and lysine 13. Position 17 is an N6-acetyllysine (lysine 17). The DNA-binding element occupies 17-21 (KRHRR).

Belongs to the histone H4 family. In terms of assembly, the nucleosome is a histone octamer containing two molecules each of H2A, H2B, H3 and H4 assembled in one H3-H4 heterotetramer and two H2A-H2B heterodimers. The octamer wraps approximately 147 bp of DNA.

It localises to the nucleus. It is found in the chromosome. Functionally, core component of nucleosome. Nucleosomes wrap and compact DNA into chromatin, limiting DNA accessibility to the cellular machineries which require DNA as a template. Histones thereby play a central role in transcription regulation, DNA repair, DNA replication and chromosomal stability. DNA accessibility is regulated via a complex set of post-translational modifications of histones, also called histone code, and nucleosome remodeling. This Mytilus chilensis (Chilean blue mussel) protein is Histone H4.